A 218-amino-acid chain; its full sequence is Probable transaldolase (218 aa).

Lysine 84 acts as the Schiff-base intermediate with substrate in catalysis.

It belongs to the transaldolase family. Type 3B subfamily.

The protein localises to the cytoplasm. It catalyses the reaction D-sedoheptulose 7-phosphate + D-glyceraldehyde 3-phosphate = D-erythrose 4-phosphate + beta-D-fructose 6-phosphate. The protein operates within carbohydrate degradation; pentose phosphate pathway; D-glyceraldehyde 3-phosphate and beta-D-fructose 6-phosphate from D-ribose 5-phosphate and D-xylulose 5-phosphate (non-oxidative stage): step 2/3. In terms of biological role, transaldolase is important for the balance of metabolites in the pentose-phosphate pathway. This is Probable transaldolase from Bartonella henselae (strain ATCC 49882 / DSM 28221 / CCUG 30454 / Houston 1) (Rochalimaea henselae).